We begin with the raw amino-acid sequence, 236 residues long: LexA repressor (236 aa).

A DNA-binding region (H-T-H motif) is located at residues 26–46 (FDEMKEALDLASKSGIHRLIT). Residues 84-107 (SPSVIEGGQGRSSPAPRPAANNDD) form a disordered region. Active-site for autocatalytic cleavage activity residues include Ser-157 and Lys-195.

The protein belongs to the peptidase S24 family. In terms of assembly, homodimer.

The enzyme catalyses Hydrolysis of Ala-|-Gly bond in repressor LexA.. In terms of biological role, represses a number of genes involved in the response to DNA damage (SOS response), including recA and lexA. In the presence of single-stranded DNA, RecA interacts with LexA causing an autocatalytic cleavage which disrupts the DNA-binding part of LexA, leading to derepression of the SOS regulon and eventually DNA repair. This Chelativorans sp. (strain BNC1) protein is LexA repressor.